Reading from the N-terminus, the 295-residue chain is ATP synthase gamma chain (295 aa).

It belongs to the ATPase gamma chain family. As to quaternary structure, F-type ATPases have 2 components, CF(1) - the catalytic core - and CF(0) - the membrane proton channel. CF(1) has five subunits: alpha(3), beta(3), gamma(1), delta(1), epsilon(1). CF(0) has three main subunits: a, b and c.

The protein resides in the cell inner membrane. Its function is as follows. Produces ATP from ADP in the presence of a proton gradient across the membrane. The gamma chain is believed to be important in regulating ATPase activity and the flow of protons through the CF(0) complex. This chain is ATP synthase gamma chain, found in Bdellovibrio bacteriovorus (strain ATCC 15356 / DSM 50701 / NCIMB 9529 / HD100).